Here is a 234-residue protein sequence, read N- to C-terminus: Large ribosomal subunit protein uL1 (234 aa).

This sequence belongs to the universal ribosomal protein uL1 family. Part of the 50S ribosomal subunit.

Binds directly to 23S rRNA. The L1 stalk is quite mobile in the ribosome, and is involved in E site tRNA release. In terms of biological role, protein L1 is also a translational repressor protein, it controls the translation of the L11 operon by binding to its mRNA. This Edwardsiella ictaluri (strain 93-146) protein is Large ribosomal subunit protein uL1.